A 427-amino-acid polypeptide reads, in one-letter code: Enolase (427 aa).

Gln163 is a binding site for (2R)-2-phosphoglycerate. The Proton donor role is filled by Glu205. Mg(2+) contacts are provided by Asp242, Glu288, and Asp315. Residues Lys340, Arg369, Ser370, and Lys391 each coordinate (2R)-2-phosphoglycerate. Lys340 serves as the catalytic Proton acceptor.

Belongs to the enolase family. It depends on Mg(2+) as a cofactor.

Its subcellular location is the cytoplasm. It localises to the secreted. The protein resides in the cell surface. The enzyme catalyses (2R)-2-phosphoglycerate = phosphoenolpyruvate + H2O. The protein operates within carbohydrate degradation; glycolysis; pyruvate from D-glyceraldehyde 3-phosphate: step 4/5. Its function is as follows. Catalyzes the reversible conversion of 2-phosphoglycerate (2-PG) into phosphoenolpyruvate (PEP). It is essential for the degradation of carbohydrates via glycolysis. In Cytophaga hutchinsonii (strain ATCC 33406 / DSM 1761 / CIP 103989 / NBRC 15051 / NCIMB 9469 / D465), this protein is Enolase.